Consider the following 292-residue polypeptide: 11-beta-hydroxysteroid dehydrogenase 1 (292 aa).

A helical membrane pass occupies residues 7-24 (YLLPILGIFLAYYYYSAN).

The protein belongs to the short-chain dehydrogenases/reductases (SDR) family. Homodimer. As to expression, expressed highest in liver and ovaries (corpora lutea, granulosa cells, thecal, uterine caruncle and intercarunculer tissues), lower expression in kidney and spleen, and lowest in the adrenal.

The protein localises to the endoplasmic reticulum membrane. The catalysed reaction is an 11beta-hydroxysteroid + NADP(+) = an 11-oxosteroid + NADPH + H(+). It catalyses the reaction corticosterone + NADP(+) = 11-dehydrocorticosterone + NADPH + H(+). The enzyme catalyses cortisone + NADPH + H(+) = cortisol + NADP(+). It carries out the reaction a 7beta-hydroxysteroid + NADP(+) = a 7-oxosteroid + NADPH + H(+). The catalysed reaction is 7-oxocholesterol + NADPH + H(+) = 7beta-hydroxycholesterol + NADP(+). It catalyses the reaction chenodeoxycholate + NADP(+) = 7-oxolithocholate + NADPH + H(+). The enzyme catalyses 7-oxolithocholate + NADPH + H(+) = ursodeoxycholate + NADP(+). It carries out the reaction glycochenodeoxycholate + NADP(+) = 7-oxoglycolithocholate + NADPH + H(+). The catalysed reaction is taurochenodeoxycholate + NADP(+) = 7-oxotaurolithocholate + NADPH + H(+). It catalyses the reaction tauroursodeoxycholate + NADP(+) = 7-oxotaurolithocholate + NADPH + H(+). The enzyme catalyses glycoursodeoxycholate + NADP(+) = 7-oxoglycolithocholate + NADPH + H(+). It carries out the reaction 7-oxopregnenolone + NADPH + H(+) = 7beta-hydroxypregnenolone + NADP(+). The catalysed reaction is 3beta,7alpha-dihydroxyandrost-5-en-17-one + NADP(+) = 3beta-hydroxy-5-androstene-7,17-dione + NADPH + H(+). It catalyses the reaction 3beta-hydroxy-5-androstene-7,17-dione + NADPH + H(+) = 3beta,7beta-dihydroxyandrost-5-en-17-one + NADP(+). The enzyme catalyses 3beta-hydroxy-5alpha-androstane-7,17-dione + NADPH + H(+) = 3beta,7beta-dihydroxy-5alpha-androstan-17-one + NADP(+). In terms of biological role, controls the reversible conversion of biologically active glucocorticoids such as cortisone to cortisol, and 11-dehydrocorticosterone to corticosterone in the presence of NADP(H). Participates in the corticosteroid receptor-mediated anti-inflammatory response, as well as metabolic and homeostatic processes. Plays a role in the secretion of aqueous humor in the eye, maintaining a normotensive, intraocular environment. Bidirectional in vitro, predominantly functions as a reductase in vivo, thereby increasing the concentration of active glucocorticoids. It has broad substrate specificity, besides glucocorticoids, it accepts other steroid and sterol substrates. Interconverts 7-oxo- and 7-hydroxy-neurosteroids such as 7-oxopregnenolone and 7beta-hydroxypregnenolone, 7-oxodehydroepiandrosterone (3beta-hydroxy-5-androstene-7,17-dione) and 7beta-hydroxydehydroepiandrosterone (3beta,7beta-dihydroxyandrost-5-en-17-one), among others. Catalyzes the stereo-specific conversion of the major dietary oxysterol, 7-ketocholesterol (7-oxocholesterol), into the more polar 7-beta-hydroxycholesterol metabolite. 7-oxocholesterol is one of the most important oxysterols, it participates in several events such as induction of apoptosis, accumulation in atherosclerotic lesions, lipid peroxidation, and induction of foam cell formation. Mediates the 7-oxo reduction of 7-oxolithocholate mainly to chenodeoxycholate, and to a lesser extent to ursodeoxycholate, both in its free form and when conjugated to glycine or taurine, providing a link between glucocorticoid activation and bile acid metabolism. Catalyzes the synthesis of 7-beta-25-dihydroxycholesterol from 7-oxo-25-hydroxycholesterol in vitro, which acts as a ligand for the G-protein-coupled receptor (GPCR) Epstein-Barr virus-induced gene 2 (EBI2) and may thereby regulate immune cell migration. This chain is 11-beta-hydroxysteroid dehydrogenase 1, found in Bos taurus (Bovine).